A 411-amino-acid polypeptide reads, in one-letter code: Indian hedgehog protein (411 aa).

The signal sequence occupies residues 1-27 (MSPARLRPRLHFCLVLLLLLVVPAAWG). The N-palmitoyl cysteine moiety is linked to residue cysteine 28. Residues glutamate 94, glutamate 95, aspartate 100, threonine 130, glutamate 131, aspartate 134, and aspartate 136 each contribute to the Ca(2+) site. The Zn(2+) site is built by histidine 145, aspartate 152, and histidine 187. The Cholesterol glycine ester moiety is linked to residue glycine 202. An N-linked (GlcNAc...) asparagine glycan is attached at asparagine 282.

It belongs to the hedgehog family. As to quaternary structure, multimer. Interacts with BOC and CDON. Interacts with PTCH1. Interacts with glypican GPC3. Cholesterylation is required for N-product targeting to lipid rafts and multimerization. In terms of processing, the C-terminal domain displays an autoproteolysis activity and a cholesterol transferase activity. Both activities result in the cleavage of the full-length protein and covalent attachment of a cholesterol moiety to the C-terminal of the newly generated N-product. The N-product is the active species in both local and long-range signaling, whereas the C-product is degraded in the endoplasmic reticulum. Post-translationally, N-palmitoylation by HHAT of N-product is required for indian hedgehog protein N-product multimerization and full activity. In terms of tissue distribution, expressed in embryonic lung, and in adult kidney and liver.

The protein resides in the cell membrane. It is found in the endoplasmic reticulum membrane. It localises to the golgi apparatus membrane. Its subcellular location is the secreted. It carries out the reaction glycyl-L-cysteinyl-[protein] + cholesterol + H(+) = [protein]-C-terminal glycyl cholesterol ester + N-terminal L-cysteinyl-[protein]. Plays a role in embryonic morphogenesis; it is involved in the regulation of endochondral skeleton formation, and the development of retinal pigment epithelium (RPE), photoreceptors and periocular tissues. Its function is as follows. The C-terminal part of the indian hedgehog protein precursor displays an autoproteolysis and a cholesterol transferase activity. Both activities result in the cleavage of the full-length protein into two parts followed by the covalent attachment of a cholesterol moiety to the C-terminal of the newly generated N-product. Both activities occur in the endoplasmic reticulum. Plays a role in hedgehog paracrine signaling. Associated with the very-low-density lipoprotein (VLDL) particles to function as a circulating morphogen for endothelial cell integrity maintenance. Functionally, the dually lipidated indian hedgehog protein N-product is a morphogen which is essential for a variety of patterning events during development. Binds to the patched (PTCH1) receptor, which functions in association with smoothened (SMO), to activate the transcription of target genes. Plays a role in morphogenesis of the skeleton by coordinating growth and differentiation of the endochondral skeleton. Positively regulates PTHLH expression during endochondral bone formation preventing chondrocyte hypertrophy. In contrast, participates in normal chondrocyte proliferation in a PTHLH-independent pathway. This Homo sapiens (Human) protein is Indian hedgehog protein.